The following is a 412-amino-acid chain: Gamma-glutamyl phosphate reductase (412 aa).

This sequence belongs to the gamma-glutamyl phosphate reductase family.

Its subcellular location is the cytoplasm. It catalyses the reaction L-glutamate 5-semialdehyde + phosphate + NADP(+) = L-glutamyl 5-phosphate + NADPH + H(+). It functions in the pathway amino-acid biosynthesis; L-proline biosynthesis; L-glutamate 5-semialdehyde from L-glutamate: step 2/2. In terms of biological role, catalyzes the NADPH-dependent reduction of L-glutamate 5-phosphate into L-glutamate 5-semialdehyde and phosphate. The product spontaneously undergoes cyclization to form 1-pyrroline-5-carboxylate. This Lactiplantibacillus plantarum (strain ATCC BAA-793 / NCIMB 8826 / WCFS1) (Lactobacillus plantarum) protein is Gamma-glutamyl phosphate reductase.